Reading from the N-terminus, the 160-residue chain is Transcription elongation factor GreA (160 aa).

Positions 3-84 (NIVDDKILLT…SKAKIIKADL (82 aa)) form a coiled coil.

The protein belongs to the GreA/GreB family.

Functionally, necessary for efficient RNA polymerase transcription elongation past template-encoded arresting sites. The arresting sites in DNA have the property of trapping a certain fraction of elongating RNA polymerases that pass through, resulting in locked ternary complexes. Cleavage of the nascent transcript by cleavage factors such as GreA or GreB allows the resumption of elongation from the new 3'terminus. GreA releases sequences of 2 to 3 nucleotides. This is Transcription elongation factor GreA from Mesomycoplasma hyopneumoniae (strain J / ATCC 25934 / NCTC 10110) (Mycoplasma hyopneumoniae).